Consider the following 1009-residue polypeptide: Protein-tyrosine kinase 2-beta (1009 aa).

The 321-residue stretch at 39-359 (RILKVCFYSN…GYCRLQGEHQ (321 aa)) folds into the FERM domain. Residues Ser-361, Ser-375, and Ser-399 each carry the phosphoserine modification. Residue Tyr-402 is modified to Phosphotyrosine; by autocatalysis. In terms of domain architecture, Protein kinase spans 425–683 (VVLNRILGEG…ELVCSLSDVY (259 aa)). ATP-binding positions include 431 to 439 (LGEGFFGEV), Lys-457, and 503 to 509 (ELYPYGE). Asp-549 serves as the catalytic Proton acceptor. The residue at position 579 (Tyr-579) is a Phosphotyrosine. Tyr-580 is subject to Phosphotyrosine; by SRC, FYN and LCK. The tract at residues 701–725 (TPKILEPTAFQEPPPKPSRPKYRPP) is disordered. Residues 712 to 725 (EPPPKPSRPKYRPP) show a composition bias toward pro residues. Phosphotyrosine is present on Tyr-722. Ser-762 is modified (phosphoserine). Position 765 is a phosphothreonine (Thr-765). Residues 801 to 1009 (KVKMRQILDK…LANLAHPPAE (209 aa)) form an interaction with TGFB1I1 region. Residues Tyr-819 and Tyr-834 each carry the phosphotyrosine modification. The residue at position 839 (Ser-839) is a Phosphoserine. Residue Thr-842 is modified to Phosphothreonine. Tyr-849 bears the Phosphotyrosine mark. The residue at position 866 (Ser-866) is a Phosphoserine. Residues 868–1009 (QPTANLDRTD…LANLAHPPAE (142 aa)) form a focal adhesion targeting (FAT) region. Tyr-881 carries the phosphotyrosine; by SRC modification.

It belongs to the protein kinase superfamily. Tyr protein kinase family. FAK subfamily. As to quaternary structure, homodimer, or homooligomer. Interacts with SIRPA and SH2D3C. Interacts with ARHGAP10. Interacts with DLG4. Interacts with KCNA2. Interacts with NPHP1, ASAP1, ASAP2, ARHGAP26, SKAP2 and TGFB1I1. The Tyr-402 phosphorylated form interacts with SRC (via SH2 domain) and SRC family members. Forms a signaling complex with EPHA1, LCK and phosphatidylinositol 3-kinase; upon activation by EFNA1. Interacts with GRB2 (via SH2 domain). Interacts with P53/TP53 and MDM2. Interacts with MYLK. Interacts with BCAR1. Interacts with PDPK1. Interacts (hypophosphorylated) with PXN. Interacts with RB1CC1. Interacts with RHOU. Interacts with VAV1. Interacts with LPXN and PTPN12. Phosphorylated on tyrosine residues in response to various stimuli that elevate the intracellular calcium concentration; this activation is indirect and may be mediated by production of reactive oxygen species (ROS). Tyr-402 is the major autophosphorylation site, but other kinases can also phosphorylate Tyr-402. Autophosphorylation occurs in trans, i.e. one subunit of the dimeric receptor phosphorylates tyrosine residues on the other subunit. Phosphorylation at Tyr-402 promotes interaction with SRC and SRC family members, leading to phosphorylation at Tyr-579; Tyr-580 and Tyr-881. Phosphorylation at Tyr-881 is important for interaction with GRB2. Phosphorylated on tyrosine residues upon activation of FGR and PKC. Recruitment by NPHP1 to cell matrix adhesions initiates Tyr-402 phosphorylation. In monocytes, adherence to substrata is required for tyrosine phosphorylation and kinase activation. Angiotensin II, thapsigargin and L-alpha-lysophosphatidic acid (LPA) also induce autophosphorylation and increase kinase activity. Phosphorylation by MYLK promotes ITGB2 activation and is thus essential to trigger neutrophil transmigration during lung injury. Dephosphorylated by PTPN12. As to expression, most abundant in the brain, with highest levels in amygdala and hippocampus. Low levels in kidney (at protein level). Also expressed in spleen and lymphocytes.

The protein localises to the cytoplasm. It is found in the perinuclear region. It localises to the cell membrane. Its subcellular location is the cell junction. The protein resides in the focal adhesion. The protein localises to the cell projection. It is found in the lamellipodium. It localises to the cell cortex. Its subcellular location is the nucleus. The enzyme catalyses L-tyrosyl-[protein] + ATP = O-phospho-L-tyrosyl-[protein] + ADP + H(+). Its activity is regulated as follows. Activated in response to stimuli that lead to increased intracellular Ca(2+) levels; this activation is indirect and may be mediated by calcium-mediated production of reactive oxygen species (ROS). Activated by autophosphorylation at Tyr-402; this creates a binding site for SRC family kinases and leads to phosphorylation at additional tyrosine residues. Phosphorylation at Tyr-402, Tyr-579 and Tyr-580 is required for optimal kinase activity. Inhibited by PF-562,271, BIRB796, PF-4618433 and by PF-431396, PF-2318841 and their derivatives. Inhibited by sulfoximine-substituted trifluoromethylpyrimidines. Inhibited by 4-amino and 5-aryl substituted pyridinone compounds. Its function is as follows. Non-receptor protein-tyrosine kinase that regulates reorganization of the actin cytoskeleton, cell polarization, cell migration, adhesion, spreading and bone remodeling. Plays a role in the regulation of the humoral immune response, and is required for normal levels of marginal B-cells in the spleen and normal migration of splenic B-cells. Required for normal macrophage polarization and migration towards sites of inflammation. Regulates cytoskeleton rearrangement and cell spreading in T-cells, and contributes to the regulation of T-cell responses. Promotes osteoclastic bone resorption; this requires both PTK2B/PYK2 and SRC. May inhibit differentiation and activity of osteoprogenitor cells. Functions in signaling downstream of integrin and collagen receptors, immune receptors, G-protein coupled receptors (GPCR), cytokine, chemokine and growth factor receptors, and mediates responses to cellular stress. Forms multisubunit signaling complexes with SRC and SRC family members upon activation; this leads to the phosphorylation of additional tyrosine residues, creating binding sites for scaffold proteins, effectors and substrates. Regulates numerous signaling pathways. Promotes activation of phosphatidylinositol 3-kinase and of the AKT1 signaling cascade. Promotes activation of NOS3. Regulates production of the cellular messenger cGMP. Promotes activation of the MAP kinase signaling cascade, including activation of MAPK1/ERK2, MAPK3/ERK1 and MAPK8/JNK1. Promotes activation of Rho family GTPases, such as RHOA and RAC1. Recruits the ubiquitin ligase MDM2 to P53/TP53 in the nucleus, and thereby regulates P53/TP53 activity, P53/TP53 ubiquitination and proteasomal degradation. Acts as a scaffold, binding to both PDPK1 and SRC, thereby allowing SRC to phosphorylate PDPK1 at 'Tyr-9, 'Tyr-373', and 'Tyr-376'. Promotes phosphorylation of NMDA receptors by SRC family members, and thereby contributes to the regulation of NMDA receptor ion channel activity and intracellular Ca(2+) levels. May also regulate potassium ion transport by phosphorylation of potassium channel subunits. Phosphorylates SRC; this increases SRC kinase activity. Phosphorylates ASAP1, NPHP1, KCNA2 and SHC1. Promotes phosphorylation of ASAP2, RHOU and PXN; this requires both SRC and PTK2/PYK2. The polypeptide is Protein-tyrosine kinase 2-beta (PTK2B) (Homo sapiens (Human)).